The following is a 295-amino-acid chain: Glycine--tRNA ligase alpha subunit (295 aa).

This sequence belongs to the class-II aminoacyl-tRNA synthetase family. In terms of assembly, tetramer of two alpha and two beta subunits.

The protein resides in the cytoplasm. The enzyme catalyses tRNA(Gly) + glycine + ATP = glycyl-tRNA(Gly) + AMP + diphosphate. In Bacillus subtilis (strain 168), this protein is Glycine--tRNA ligase alpha subunit (glyQ).